A 389-amino-acid chain; its full sequence is Alkanesulfonate monooxygenase (389 aa).

It belongs to the SsuD family.

It carries out the reaction an alkanesulfonate + FMNH2 + O2 = an aldehyde + FMN + sulfite + H2O + 2 H(+). Functionally, catalyzes the desulfonation of aliphatic sulfonates. The protein is Alkanesulfonate monooxygenase of Agrobacterium fabrum (strain C58 / ATCC 33970) (Agrobacterium tumefaciens (strain C58)).